The following is a 107-amino-acid chain: Putidaredoxin (107 aa).

The region spanning 2-106 is the 2Fe-2S ferredoxin-type domain; the sequence is SKVVYVSHDG…GIVVDVPDRQ (105 aa). 4 residues coordinate [2Fe-2S] cluster: Cys40, Cys46, Cys49, and Cys87.

This sequence belongs to the adrenodoxin/putidaredoxin family. In terms of assembly, monomer. It depends on [2Fe-2S] cluster as a cofactor.

Its function is as follows. The oxidation of camphor by cytochrome P450-CAM requires the participation of a flavoprotein, putidaredoxin reductase, and an iron-sulfur protein, putidaredoxin, to mediate the transfer of electrons from NADH to P450 for oxygen activation. This Pseudomonas putida (Arthrobacter siderocapsulatus) protein is Putidaredoxin (camB).